We begin with the raw amino-acid sequence, 194 residues long: MKEIILATSNPGKIKELEQLLAPTLCIPQADLGISDAEETGLSFIENAILKARHASSLANKPALADDSGLVVPSLNGEPGIYSARYAGIKANDENNIQQLLSKMADLSQEQRQAYFFCAIALMQHAKDPTPLIATGVFHGVISVKPSGTNGFGYDPVFYLNEYQCTAAELPAKIKNRISHRAKALNQLRALLPD.

8-13 (TSNPGK) serves as a coordination point for substrate. Residues Glu-38 and Asp-67 each coordinate Mg(2+). Asp-67 serves as the catalytic Proton acceptor. Substrate contacts are provided by residues Ser-68, 152-155 (FGYD), Lys-175, and 180-181 (HR).

Belongs to the HAM1 NTPase family. In terms of assembly, homodimer. Mg(2+) serves as cofactor.

The enzyme catalyses XTP + H2O = XMP + diphosphate + H(+). It carries out the reaction dITP + H2O = dIMP + diphosphate + H(+). It catalyses the reaction ITP + H2O = IMP + diphosphate + H(+). In terms of biological role, pyrophosphatase that catalyzes the hydrolysis of nucleoside triphosphates to their monophosphate derivatives, with a high preference for the non-canonical purine nucleotides XTP (xanthosine triphosphate), dITP (deoxyinosine triphosphate) and ITP. Seems to function as a house-cleaning enzyme that removes non-canonical purine nucleotides from the nucleotide pool, thus preventing their incorporation into DNA/RNA and avoiding chromosomal lesions. The protein is dITP/XTP pyrophosphatase of Legionella pneumophila (strain Lens).